The sequence spans 237 residues: 4'-phosphopantetheinyl transferase HetI (237 aa).

Mg(2+)-binding residues include Asp128, Glu130, and Glu174.

Belongs to the P-Pant transferase superfamily. Gsp/Sfp/HetI/AcpT family. Mg(2+) serves as cofactor.

It catalyses the reaction apo-[peptidyl-carrier protein] + CoA = holo-[peptidyl-carrier protein] + adenosine 3',5'-bisphosphate + H(+). Its function is as follows. Probably activates the acyl carrier protein (ACP) domain of HetM, by transferring the 4'-phosphopantetheinyl moiety of coenzyme A (CoA) to a serine residue. May be required for maintaining vegetative growth and probably acts via HetN to inhibit differentiation. The chain is 4'-phosphopantetheinyl transferase HetI (hetI) from Nostoc sp. (strain PCC 7120 / SAG 25.82 / UTEX 2576).